The following is a 153-amino-acid chain: Cytochrome c-type biogenesis protein CcmE (153 aa).

Residues 1–6 lie on the Cytoplasmic side of the membrane; it reads MNARRR. A helical; Signal-anchor for type II membrane protein transmembrane segment spans residues 7–27; the sequence is LWSLLMLILAVGTAATLTIMA. The Periplasmic portion of the chain corresponds to 28–153; it reads LRRNLTYLYM…LDTPIAQTTP (126 aa). Heme contacts are provided by His-121 and Tyr-125. Positions 130–141 are enriched in polar residues; the sequence is LTNKMQPTPTQH. The interval 130–153 is disordered; the sequence is LTNKMQPTPTQHTHLDTPIAQTTP.

It belongs to the CcmE/CycJ family.

Its subcellular location is the cell inner membrane. Functionally, heme chaperone required for the biogenesis of c-type cytochromes. Transiently binds heme delivered by CcmC and transfers the heme to apo-cytochromes in a process facilitated by CcmF and CcmH. The protein is Cytochrome c-type biogenesis protein CcmE of Xylella fastidiosa (strain 9a5c).